A 160-amino-acid polypeptide reads, in one-letter code: MVATSEPKIAVKAQYVKDLSFENPDPINSLFKITEKPKIDTKLDINITKLSEDNHFEVELSTNVSATCNDKKIFHIEVVYAGIFQLTNISEEDKKFILSVRCPEIIFPYVRQIISESTQKGGFLPLMIDYIDFAEIISNTQTTNNPQKSIKPEFDVSNKQ.

This sequence belongs to the SecB family. Homotetramer, a dimer of dimers. One homotetramer interacts with 1 SecA dimer.

The protein resides in the cytoplasm. In terms of biological role, one of the proteins required for the normal export of preproteins out of the cell cytoplasm. It is a molecular chaperone that binds to a subset of precursor proteins, maintaining them in a translocation-competent state. It also specifically binds to its receptor SecA. The chain is Protein-export protein SecB from Orientia tsutsugamushi (strain Boryong) (Rickettsia tsutsugamushi).